The sequence spans 405 residues: Cysteine desulfurase IscS (405 aa).

Pyridoxal 5'-phosphate-binding positions include 75-76, N155, Q183, and 203-205; these read AT and SGH. K206 bears the N6-(pyridoxal phosphate)lysine mark. T243 lines the pyridoxal 5'-phosphate pocket. The active-site Cysteine persulfide intermediate is the C329. C329 contacts [2Fe-2S] cluster.

This sequence belongs to the class-V pyridoxal-phosphate-dependent aminotransferase family. NifS/IscS subfamily. In terms of assembly, homodimer. Forms a heterotetramer with IscU, interacts with other sulfur acceptors. Pyridoxal 5'-phosphate serves as cofactor.

It is found in the cytoplasm. The catalysed reaction is (sulfur carrier)-H + L-cysteine = (sulfur carrier)-SH + L-alanine. It participates in cofactor biosynthesis; iron-sulfur cluster biosynthesis. Functionally, master enzyme that delivers sulfur to a number of partners involved in Fe-S cluster assembly, tRNA modification or cofactor biosynthesis. Catalyzes the removal of elemental sulfur atoms from cysteine to produce alanine. Functions as a sulfur delivery protein for Fe-S cluster synthesis onto IscU, an Fe-S scaffold assembly protein, as well as other S acceptor proteins. In Pseudoalteromonas translucida (strain TAC 125), this protein is Cysteine desulfurase IscS.